A 563-amino-acid polypeptide reads, in one-letter code: Alpha-humulene synthase (563 aa).

Mg(2+) is bound by residues Asp316, Asp320, Asp461, and Glu469. Residues 316 to 320 (DDIYD) carry the DDXXD motif motif.

It belongs to the terpene synthase family. Tpsa subfamily. The cofactor is Mg(2+). Mn(2+) serves as cofactor. Expressed in trichomes, cones and young leaves.

It catalyses the reaction (2E,6E)-farnesyl diphosphate = alpha-humulene + diphosphate. The protein operates within sesquiterpene biosynthesis. Its pathway is secondary metabolite biosynthesis; terpenoid biosynthesis. Its function is as follows. Sesquiterpene synthase that catalyzes the formation of alpha-humulene. Can use farnesyl diphosphate (FPP) as substrate, but not geranyl diphosphate (GPP) or geranylgeranyl diphosphate (GGPP). The polypeptide is Alpha-humulene synthase (Humulus lupulus (European hop)).